A 461-amino-acid chain; its full sequence is Coagulation factor IX (461 aa).

The signal sequence occupies residues 1–28; the sequence is MQRVNMIMAESPGLITICLLGYLLSAEC. A propeptide spanning residues 29–46 is cleaved from the precursor; it reads TVFLDHENANKILNRPKR. Tyr47, Asn48, Glu53, Glu54, Glu61, Glu63, Glu66, Glu67, Glu72, Glu73, and Glu76 together coordinate Ca(2+). In terms of domain architecture, Gla spans 47–92; it reads YNSGKLEEFVQGNLERECMEEKCSFEEAREVFENTERTTEFWKQYV. 11 positions are modified to 4-carboxyglutamate: Glu53, Glu54, Glu61, Glu63, Glu66, Glu67, Glu72, Glu73, Glu76, Glu79, and Glu82. Glu61 lines the Mg(2+) pocket. A disulfide bridge links Cys64 with Cys69. Glu66 is a Mg(2+) binding site. Residue Glu72 participates in Mg(2+) binding. Residue Glu76 coordinates Mg(2+). Glu82 provides a ligand contact to Ca(2+). Position 82 (Glu82) interacts with Mg(2+). O-linked (GalNAc...) threonine glycosylation is present at Thr85. Ca(2+) contacts are provided by Glu86, Asp93, Gly94, and Gln96. Position 86 is a 4-carboxyglutamate (Glu86). A Mg(2+)-binding site is contributed by Glu86. One can recognise an EGF-like 1; calcium-binding domain in the interval 93-129; that stretch reads DGDQCESNPCLNGGSCKDDINSYECWCPFGFEGKNCE. 10 cysteine pairs are disulfide-bonded: Cys97-Cys108, Cys102-Cys117, Cys119-Cys128, Cys134-Cys145, Cys141-Cys155, Cys157-Cys170, Cys178-Cys335, Cys252-Cys268, Cys382-Cys396, and Cys407-Cys435. O-linked (Glc...) serine glycosylation is present at Ser99. Ser107 is a glycosylation site (O-linked (Fuc...) serine). Positions 110 and 111 each coordinate Ca(2+). At Asp110 the chain carries (3R)-3-hydroxyaspartate. Phosphoserine is present on Ser114. The 42-residue stretch at 130 to 171 folds into the EGF-like 2 domain; the sequence is LDVTCNIKNGRCEQFCKNSADNKVVCSCTEGYRLAENQKSCE. A propeptide spans 192-226 (activation peptide); the sequence is AETVFPDVDYVNSTEAETILDNITQSTQSFNDFTR. Position 201 is a sulfotyrosine (Tyr201). The N-linked (GlcNAc...) asparagine glycan is linked to Asn203. Ser204 is modified (phosphoserine). Thr205 carries the post-translational modification Phosphothreonine; alternate. A glycan (O-linked (GalNAc...) threonine; alternate) is linked at Thr205. The N-linked (GlcNAc...) asparagine glycan is linked to Asn213. Residues Thr215 and Thr225 are each glycosylated (O-linked (GalNAc...) threonine). A Peptidase S1 domain is found at 227–459; that stretch reads VVGGEDAKPG…YVNWIKEKTK (233 aa). Catalysis depends on His267, which acts as the Charge relay system. The Ca(2+) site is built by Glu281, Asn283, Glu286, Glu288, and Glu291. Asp315 functions as the Charge relay system in the catalytic mechanism. The active-site Charge relay system is Ser411.

This sequence belongs to the peptidase S1 family. Heterodimer of a light chain and a heavy chain; disulfide-linked. Interacts (inactive and activated) with F11 (activated) in calcium-dependent manner. Interacts with SERPINC1. Interacts (activated) with iripin-8, a serine protease inhibitor from Ixodes ricinus saliva. Interacts (inactive and activated) with nitrophorin-2, an anticoagulant protein from Rhodnius prolixus. Post-translationally, activated by factor XIa, which excises the activation peptide. The propeptide can also be removed by snake venom protease. Activated by coagulation factor VIIa-tissue factor (F7-F3) complex in calcium-dependent manner. In terms of processing, the iron and 2-oxoglutarate dependent 3-hydroxylation of aspartate and asparagine is (R) stereospecific within EGF domains. Detected in blood plasma (at protein level). Synthesized primarily in the liver and secreted in plasma.

The protein resides in the secreted. The enzyme catalyses Selective cleavage of Arg-|-Ile bond in factor X to form factor Xa.. Functionally, factor IX is a vitamin K-dependent plasma protein that participates in the intrinsic pathway of blood coagulation by converting factor X to its active form in the presence of Ca(2+) ions, phospholipids, and factor VIIIa. This is Coagulation factor IX (F9) from Homo sapiens (Human).